The primary structure comprises 591 residues: Proteasome-associated ATPase (591 aa).

The stretch at 8–77 forms a coiled coil; sequence DSVAAARELE…LREEVDRLGQ (70 aa). 278-283 provides a ligand contact to ATP; that stretch reads GCGKTL. The docks into pockets in the proteasome alpha-ring stretch occupies residues 590–591; it reads YL.

Belongs to the AAA ATPase family. Homohexamer. Assembles into a hexameric ring structure that caps the 20S proteasome core. Strongly interacts with the prokaryotic ubiquitin-like protein Pup through a hydrophobic interface; the interacting region of ARC lies in its N-terminal coiled-coil domain. There is one Pup binding site per ARC hexamer ring. Upon ATP-binding, the C-terminus of ARC interacts with the alpha-rings of the proteasome core, possibly by binding to the intersubunit pockets.

The protein operates within protein degradation; proteasomal Pup-dependent pathway. Functionally, ATPase which is responsible for recognizing, binding, unfolding and translocation of pupylated proteins into the bacterial 20S proteasome core particle. May be essential for opening the gate of the 20S proteasome via an interaction with its C-terminus, thereby allowing substrate entry and access to the site of proteolysis. Thus, the C-termini of the proteasomal ATPase may function like a 'key in a lock' to induce gate opening and therefore regulate proteolysis. The polypeptide is Proteasome-associated ATPase (Rhodococcus jostii (strain RHA1)).